Here is a 509-residue protein sequence, read N- to C-terminus: Cytochrome P450 6A1 (509 aa).

Cysteine 449 lines the heme pocket.

The protein belongs to the cytochrome P450 family. Heme is required as a cofactor.

The protein localises to the endoplasmic reticulum membrane. It is found in the microsome membrane. It catalyses the reaction an organic molecule + reduced [NADPH--hemoprotein reductase] + O2 = an alcohol + oxidized [NADPH--hemoprotein reductase] + H2O + H(+). Involved in the metabolism of insect hormones and in the breakdown of synthetic insecticides. This is Cytochrome P450 6A1 (CYP6A1) from Musca domestica (House fly).